The following is a 403-amino-acid chain: Acetylornithine aminotransferase (403 aa).

Pyridoxal 5'-phosphate is bound by residues 107-108 and F140; that span reads GA. R143 lines the N(2)-acetyl-L-ornithine pocket. A pyridoxal 5'-phosphate-binding site is contributed by 225–228; that stretch reads DEVQ. N6-(pyridoxal phosphate)lysine is present on K254. S282 serves as a coordination point for N(2)-acetyl-L-ornithine. T283 provides a ligand contact to pyridoxal 5'-phosphate.

This sequence belongs to the class-III pyridoxal-phosphate-dependent aminotransferase family. ArgD subfamily. Homodimer. Pyridoxal 5'-phosphate serves as cofactor.

It is found in the cytoplasm. The enzyme catalyses N(2)-acetyl-L-ornithine + 2-oxoglutarate = N-acetyl-L-glutamate 5-semialdehyde + L-glutamate. It functions in the pathway amino-acid biosynthesis; L-arginine biosynthesis; N(2)-acetyl-L-ornithine from L-glutamate: step 4/4. This chain is Acetylornithine aminotransferase, found in Vibrio cholerae serotype O1 (strain ATCC 39315 / El Tor Inaba N16961).